A 632-amino-acid polypeptide reads, in one-letter code: Polygalacturonase non-catalytic subunit AroGP3 (632 aa).

The first 27 residues, 1-27 (MHTKILLPSCILLLLLFTLSSLDVVVA), serve as a signal peptide directing secretion. A propeptide spanning residues 28 to 109 (KDGDESGNPF…MCALDLLPSL (82 aa)) is cleaved from the precursor. Residues N125, N143, N258, N280, N336, N371, and N389 are each glycosylated (N-linked (GlcNAc...) asparagine). The BURP domain maps to 417–631 (FFREKMLKSG…FENDMTWATA (215 aa)).

In terms of assembly, interacts with polygalacturonase to form heterodimers.

It localises to the secreted. Its subcellular location is the extracellular space. It is found in the apoplast. The protein resides in the cell wall. Functionally, non-catalytic subunit of polygalacturonase. The protein is Polygalacturonase non-catalytic subunit AroGP3 (GP3) of Solanum lycopersicum (Tomato).